We begin with the raw amino-acid sequence, 136 residues long: Small ribosomal subunit protein uS11 (136 aa).

This sequence belongs to the universal ribosomal protein uS11 family. In terms of assembly, part of the 30S ribosomal subunit. Interacts with proteins S7 and S18. Binds to IF-3.

Located on the platform of the 30S subunit, it bridges several disparate RNA helices of the 16S rRNA. Forms part of the Shine-Dalgarno cleft in the 70S ribosome. This is Small ribosomal subunit protein uS11 from Leptospira borgpetersenii serovar Hardjo-bovis (strain JB197).